We begin with the raw amino-acid sequence, 507 residues long: Phosphoenolpyruvate carboxylase (507 aa).

The disordered stretch occupies residues 1–25; it reads MHKIDRKIPNIMGTQHPDNAGVPFF.

It belongs to the PEPCase type 2 family. Homotetramer. It depends on Mg(2+) as a cofactor.

It catalyses the reaction oxaloacetate + phosphate = phosphoenolpyruvate + hydrogencarbonate. Its function is as follows. Catalyzes the irreversible beta-carboxylation of phosphoenolpyruvate (PEP) to form oxaloacetate (OAA), a four-carbon dicarboxylic acid source for the tricarboxylic acid cycle. This Oenococcus oeni (strain ATCC BAA-331 / PSU-1) protein is Phosphoenolpyruvate carboxylase.